We begin with the raw amino-acid sequence, 321 residues long: Endoglucanase 1 (321 aa).

An N-terminal signal peptide occupies residues Met1–Ala27. Residue Asp110 is part of the active site. An intrachain disulfide couples Cys112 to Cys156. Asp149 functions as the Proton donor in the catalytic mechanism. Asp295 serves as the catalytic Nucleophile.

Belongs to the glycosyl hydrolase 6 (cellulase B) family.

The catalysed reaction is Endohydrolysis of (1-&gt;4)-beta-D-glucosidic linkages in cellulose, lichenin and cereal beta-D-glucans.. Its function is as follows. Implicated in the mechanism of induction exerted by cellobiose. This chain is Endoglucanase 1 (celA1), found in Streptomyces halstedii.